Reading from the N-terminus, the 869-residue chain is Valine--tRNA ligase (869 aa).

The short motif at 51–61 (PNVTGNLHLGH) is the 'HIGH' region element. The 'KMSKS' region signature appears at 523 to 527 (KMSKS). ATP is bound at residue Lys526. Residues 797 to 869 (EDLLGSNNEA…ELEKLLSSHK (73 aa)) adopt a coiled-coil conformation.

This sequence belongs to the class-I aminoacyl-tRNA synthetase family. ValS type 1 subfamily. Monomer.

It localises to the cytoplasm. It catalyses the reaction tRNA(Val) + L-valine + ATP = L-valyl-tRNA(Val) + AMP + diphosphate. Its function is as follows. Catalyzes the attachment of valine to tRNA(Val). As ValRS can inadvertently accommodate and process structurally similar amino acids such as threonine, to avoid such errors, it has a 'posttransfer' editing activity that hydrolyzes mischarged Thr-tRNA(Val) in a tRNA-dependent manner. In Malacoplasma penetrans (strain HF-2) (Mycoplasma penetrans), this protein is Valine--tRNA ligase.